Reading from the N-terminus, the 333-residue chain is Low specificity L-threonine aldolase (333 aa).

At Lys197 the chain carries N6-(pyridoxal phosphate)lysine.

The protein belongs to the threonine aldolase family. As to quaternary structure, homotetramer. It depends on pyridoxal 5'-phosphate as a cofactor.

The catalysed reaction is L-threonine = acetaldehyde + glycine. The enzyme catalyses L-allo-threonine = acetaldehyde + glycine. In terms of biological role, catalyzes the cleavage of L-allo-threonine and L-threonine to glycine and acetaldehyde. L-threo-phenylserine and L-erythro-phenylserine are also good substrates. This is Low specificity L-threonine aldolase (ltaE) from Escherichia coli O157:H7.